A 1488-amino-acid polypeptide reads, in one-letter code: Chromosome partition protein MukB (1488 aa).

34 to 41 is a binding site for ATP; the sequence is GGNGAGKS. Coiled coils occupy residues 326-418, 444-472, and 509-602; these read LEAD…QYNQ, LDTF…QTAH, and RHLA…QRAP. A flexible hinge region spans residues 666-783; sequence PGGAEDQRLN…SLPIFGRAAR (118 aa). Coiled-coil stretches lie at residues 835-923, 977-1116, and 1209-1265; these read EAEI…AKLE, EMLS…AKAG, and VEAI…LQSV. The tract at residues 1049–1074 is disordered; sequence ADSGAEERARQRRDELHAQLSNNRSR. Positions 1051 to 1065 are enriched in basic and acidic residues; that stretch reads SGAEERARQRRDELH.

This sequence belongs to the SMC family. MukB subfamily. In terms of assembly, homodimerization via its hinge domain. Binds to DNA via its C-terminal region. Interacts, and probably forms a ternary complex, with MukE and MukF via its C-terminal region. The complex formation is stimulated by calcium or magnesium. Interacts with tubulin-related protein FtsZ.

The protein resides in the cytoplasm. The protein localises to the nucleoid. Plays a central role in chromosome condensation, segregation and cell cycle progression. Functions as a homodimer, which is essential for chromosome partition. Involved in negative DNA supercoiling in vivo, and by this means organize and compact chromosomes. May achieve or facilitate chromosome segregation by condensation DNA from both sides of a centrally located replisome during cell division. The sequence is that of Chromosome partition protein MukB from Salmonella schwarzengrund (strain CVM19633).